The chain runs to 218 residues: Probable carboxylesterase clz11 (218 aa).

Positions 7–9 (LVG) match the Involved in the stabilization of the negatively charged intermediate by the formation of the oxyanion hole motif. The active site involves Ser77.

It belongs to the 'GDXG' lipolytic enzyme family.

The catalysed reaction is a carboxylic ester + H2O = an alcohol + a carboxylate + H(+). It functions in the pathway secondary metabolite biosynthesis. Functionally, probable carboxylesterase; part of the gene cluster that mediates the biosynthesis of squalestatin S1 (SQS1, also known as zaragozic acid A), a heavily oxidized fungal polyketide that offers potent cholesterol lowering activity by targeting squalene synthase (SS). SQS1 is composed of a 2,8-dioxobicyclic[3.2.1]octane-3,4,5-tricarboxyclic acid core that is connected to two lipophilic polyketide arms. These initial steps feature the priming of an unusual benzoic acid starter unit onto the highly reducing polyketide synthase clz14, followed by oxaloacetate extension and product release to generate a tricarboxylic acid containing product. The phenylalanine ammonia lyase (PAL) clz10 and the acyl-CoA ligase clz12 are involved in transforming phenylalanine into benzoyl-CoA. The citrate synthase-like protein clz17 is involved in connecting the C-alpha-carbons of the hexaketide chain and oxaloacetate to afford the tricarboxylic acid unit. The potential hydrolytic enzymes, clz11 and clz13, are in close proximity to pks2 and may participate in product release. On the other side, the tetraketide arm is synthesized by a the squalestatin tetraketide synthase clz2 and enzymatically esterified to the core in the last biosynthetic step, by the acetyltransferase clz6. The biosynthesis of the tetraketide must involve 3 rounds of chain extension. After the first and second rounds methyl-transfer occurs, and in all rounds of extension the ketoreductase and dehydratase are active. The enoyl reductase and C-MeT of clz2 are not active in the final round of extension. The acetyltransferase clz6 appears to have a broad substrate selectivity for its acyl CoA substrate, allowing the in vitro synthesis of novel squalestatins. The biosynthesis of SQS1 requires several oxidative steps likely performed by oxidoreductases clz3, clz15 and clz16. Finally, in support of the identification of the cluster as being responsible for SQS1 production, the cluster contains a gene encoding a putative squalene synthase (SS) clz20, suggesting a likely mechanism for self-resistance. In Cochliobolus lunatus (Filamentous fungus), this protein is Probable carboxylesterase clz11.